The chain runs to 491 residues: Stage IV sporulation protein A (491 aa).

The Walker A motif; involved in ATP-binding motif lies at 23-30 (GPVRTGKS). 23–30 (GPVRTGKS) contributes to the ATP binding site. Residues 334 to 362 (QLLSLITRLSKVKNEYDKIESALIDAKIK) are a coiled coil.

Interacts (via Walker A motif) with SipL (via C-terminus LysM domain).

Its subcellular location is the cytoplasm. It carries out the reaction ATP + H2O = ADP + phosphate + H(+). In terms of biological role, ATPase. Has a role at an early stage in the morphogenesis of the spore coat and is required for proper coat localization to the forespore. This chain is Stage IV sporulation protein A, found in Clostridioides difficile (strain 630) (Peptoclostridium difficile).